A 571-amino-acid polypeptide reads, in one-letter code: METENQKTMEESTEKRKEEKKKRSRVKQVLADIAKQVDFWFGDANLHKDRFLREQIEKSRDGYVDISLLVSFNKMKKLTTDGKLIARALKSSSVVELDLEGTRIRRKKPLGERPKDEEERTVYVELLPKNVTHSWIERVFGKCGNVVYISIPHYKSTGDPKGFAFVEFETKEQAAKAIEFLNNPPEEAPRKPGIFPKTVKNKPIPSLRVAEEKKKKKKKKGRIKKEESVQAKELVVDSSSSGVSKATKRPRTASEGSEAETPEAPKQPAKKKKKRDKVETGGLPESKAGKRERSSAEDEDCLPPRPKLKKRAQKDGGGPAASEVSKEHRDLEFCSTEEEKEPGDRKGDSLSKGKRKHKKKHKERHKMGEEVIPLRVLSKTEWMDLKKEYLALQKASMASLKKTISQIKLESEMETESKAPPGSGQQCSTQEKVSAQGPQFVTGVIVKILSEDPLPGRKQVKDILATISEVVYIDLLEGDTECHARFKTPEDAQAVMNAQTEIKKKHSWNLEILSGDHEQRYWQKILVDRQAKLNQPREKKRGTEKLITKAEKIRLAKTQQASQHIRFSEYD.

The residue at position 1 (Met1) is an N-acetylmethionine. Residues 1 to 17 are compositionally biased toward basic and acidic residues; that stretch reads METENQKTMEESTEKRK. 2 disordered regions span residues 1–25 and 181–366; these read METE…KRSR and LNNP…ERHK. The HTH La-type RNA-binding domain maps to 23–117; the sequence is RSRVKQVLAD…KPLGERPKDE (95 aa). In terms of domain architecture, RRM spans 120-198; sequence RTVYVELLPK…PRKPGIFPKT (79 aa). The span at 214 to 223 shows a compositional bias: basic residues; sequence KKKKKKKGRI. Residue Lys232 forms a Glycyl lysine isopeptide (Lys-Gly) (interchain with G-Cter in SUMO2) linkage. Thr252 is modified (phosphothreonine). Phosphoserine is present on residues Ser254 and Ser257. A Phosphothreonine modification is found at Thr261. A compositionally biased stretch (basic and acidic residues) spans 287–296; the sequence is KAGKRERSSA. Ser294, Ser295, and Ser335 each carry phosphoserine. Thr336 carries the phosphothreonine modification. A compositionally biased stretch (basic and acidic residues) spans 342–351; that stretch reads PGDRKGDSLS. Ser349 bears the Phosphoserine mark. Basic residues predominate over residues 352 to 365; the sequence is KGKRKHKKKHKERH. Lys408 is covalently cross-linked (Glycyl lysine isopeptide (Lys-Gly) (interchain with G-Cter in SUMO2)). A disordered region spans residues 411-432; it reads SEMETESKAPPGSGQQCSTQEK. Over residues 423 to 432 the composition is skewed to polar residues; the sequence is SGQQCSTQEK. One can recognise a xRRM domain in the interval 439–552; sequence QFVTGVIVKI…TEKLITKAEK (114 aa).

The protein belongs to the LARP7 family. In terms of assembly, core component of the 7SK RNP complex, at least composed of 7SK RNA, LARP7, MEPCE, HEXIM1 (or HEXIM2) and P-TEFb (composed of CDK9 and CCNT1/cyclin-T1). Interacts with METTL16. Interacts with RBM7; upon genotoxic stress this interaction is enhanced, triggering the release of inactive P-TEFb complex from the core, yielding to P-TEFb complex activation. Associates with box C/D small nucleolar ribonucleoprotein (snoRNP) complexes.

It localises to the nucleus. The protein resides in the nucleoplasm. In terms of biological role, RNA-binding protein that specifically binds distinct small nuclear RNA (snRNAs) and regulates their processing and function. Specifically binds the 7SK snRNA (7SK RNA) and acts as a core component of the 7SK ribonucleoprotein (RNP) complex, thereby acting as a negative regulator of transcription elongation by RNA polymerase II. The 7SK RNP complex sequesters the positive transcription elongation factor b (P-TEFb) in a large inactive 7SK RNP complex preventing RNA polymerase II phosphorylation and subsequent transcriptional elongation. The 7SK RNP complex also promotes snRNA gene transcription by RNA polymerase II via interaction with the little elongation complex (LEC). LARP7 specifically binds to the highly conserved 3'-terminal U-rich stretch of 7SK RNA; on stimulation, remains associated with 7SK RNA, whereas P-TEFb is released from the complex. LARP7 also acts as a regulator of mRNA splicing fidelity by promoting U6 snRNA processing. Specifically binds U6 snRNAs and associates with a subset of box C/D RNP complexes: promotes U6 snRNA 2'-O-methylation by facilitating U6 snRNA loading into box C/D RNP complexes. U6 snRNA 2'-O-methylation is required for mRNA splicing fidelity. Binds U6 snRNAs with a 5'-CAGGG-3' sequence motif. U6 snRNA processing is required for spermatogenesis. In Rattus norvegicus (Rat), this protein is La-related protein 7.